The following is a 271-amino-acid chain: Putative hydro-lyase Mrad2831_3350 (271 aa).

It belongs to the D-glutamate cyclase family.

In Methylobacterium radiotolerans (strain ATCC 27329 / DSM 1819 / JCM 2831 / NBRC 15690 / NCIMB 10815 / 0-1), this protein is Putative hydro-lyase Mrad2831_3350.